Here is a 598-residue protein sequence, read N- to C-terminus: Elongation factor 4 (598 aa).

The 183-residue stretch at 4 to 186 (INIRNFAIIA…AIVSRLPAPS (183 aa)) folds into the tr-type G domain. GTP is bound by residues 16–21 (DHGKST) and 133–136 (NKID).

Belongs to the TRAFAC class translation factor GTPase superfamily. Classic translation factor GTPase family. LepA subfamily.

It is found in the cell inner membrane. It catalyses the reaction GTP + H2O = GDP + phosphate + H(+). Required for accurate and efficient protein synthesis under certain stress conditions. May act as a fidelity factor of the translation reaction, by catalyzing a one-codon backward translocation of tRNAs on improperly translocated ribosomes. Back-translocation proceeds from a post-translocation (POST) complex to a pre-translocation (PRE) complex, thus giving elongation factor G a second chance to translocate the tRNAs correctly. Binds to ribosomes in a GTP-dependent manner. This is Elongation factor 4 from Ehrlichia ruminantium (strain Gardel).